The following is a 319-amino-acid chain: Biotin synthase (319 aa).

Residues 44-273 enclose the Radical SAM core domain; the sequence is IHGDGIDLCS…EAKIRLAGGR (230 aa). [4Fe-4S] cluster-binding residues include cysteine 62, cysteine 66, and cysteine 69. [2Fe-2S] cluster-binding residues include serine 106, cysteine 138, cysteine 198, and arginine 268.

This sequence belongs to the radical SAM superfamily. Biotin synthase family. As to quaternary structure, homodimer. It depends on [4Fe-4S] cluster as a cofactor. Requires [2Fe-2S] cluster as cofactor.

The catalysed reaction is (4R,5S)-dethiobiotin + (sulfur carrier)-SH + 2 reduced [2Fe-2S]-[ferredoxin] + 2 S-adenosyl-L-methionine = (sulfur carrier)-H + biotin + 2 5'-deoxyadenosine + 2 L-methionine + 2 oxidized [2Fe-2S]-[ferredoxin]. Its pathway is cofactor biosynthesis; biotin biosynthesis; biotin from 7,8-diaminononanoate: step 2/2. Functionally, catalyzes the conversion of dethiobiotin (DTB) to biotin by the insertion of a sulfur atom into dethiobiotin via a radical-based mechanism. This Clostridium perfringens (strain ATCC 13124 / DSM 756 / JCM 1290 / NCIMB 6125 / NCTC 8237 / Type A) protein is Biotin synthase.